Consider the following 857-residue polypeptide: MSSLSDHTPMMQQYWKLKNQHPDQLMFYRMGDFYEIFYEDAKKAAKLLDITLTARGQSAGQSIPMCGIPFHSLEGYLAKLVKLGESVVICEQIGDPATSKGPVERQVVRIITPGTVSDEALLDERRDNLIAALLGDERLFGLAVLDITSGNFSVQEIKGWENLLAELERLNPVELLIPDDWPRDLPAEKRPGARRRAPWDFDRDSARKALCQQFATKDLKGFGCDKLTLAIGAAGCLLTYAKETQRTALPHLRSLRHERLDDTVILDGASRRNLELDINLAGGRDNTLQSVIDRCQTAMASRLLSRWLNRPLRDLKVLQARQDSIRCLLDSYRFEKLQPQLKEIGDIERILARIGLRNARPRDLARLRDALGALPELQNAMTELEAPHLARLAAITGTYPELASLLERAIIDNPPAVIRDGGVLKAGYDNELDELLAISENAGQFLIDLEAREKARTGLANLKVGYNRVHGYFIELPTKQAEQAPGDYIRRQTLKGAERFITPELKAFEDKALSAKSRALAREKMLYDALLETLISHLAPLQDSAAALAELDVLSNLAERALNLDLSCPRFVDEPCLRIEQGRHPVVEQVLTTPFVANDLGLDNSTRMLIITGPNMGGKSTYMRQTALIVLLAHIGSFVPAASCELSLVDRIFTRIGSSDDLAGGRSTFMVEMSETANILHNATDRSLVLMDEVGRGTSTFDGLSLAWAAAERLAQLRAYTLFATHYFELTVLPESEPLVANVHLNATEHNERIVFLHHVLPGPASQSYGLAVAQLAGVPTAVIQRAREHLGRLETTSLPHEQPAAHKAKDAPQVPHQSDLFASLPHPAIEKLGKLQLDDMTPRQAIEMLYQLKNLL.

An ATP-binding site is contributed by 613–620 (GPNMGGKS). A disordered region spans residues 797–820 (TSLPHEQPAAHKAKDAPQVPHQSD).

This sequence belongs to the DNA mismatch repair MutS family.

Functionally, this protein is involved in the repair of mismatches in DNA. It is possible that it carries out the mismatch recognition step. This protein has a weak ATPase activity. This chain is DNA mismatch repair protein MutS, found in Pseudomonas putida (strain ATCC 700007 / DSM 6899 / JCM 31910 / BCRC 17059 / LMG 24140 / F1).